The following is a 203-amino-acid chain: ATP-dependent Clp protease proteolytic subunit 2 (203 aa).

Serine 98 (nucleophile) is an active-site residue. The active site involves histidine 123.

Belongs to the peptidase S14 family. As to quaternary structure, fourteen ClpP subunits assemble into 2 heptameric rings which stack back to back to give a disk-like structure with a central cavity, resembling the structure of eukaryotic proteasomes.

The protein localises to the cytoplasm. The catalysed reaction is Hydrolysis of proteins to small peptides in the presence of ATP and magnesium. alpha-casein is the usual test substrate. In the absence of ATP, only oligopeptides shorter than five residues are hydrolyzed (such as succinyl-Leu-Tyr-|-NHMec, and Leu-Tyr-Leu-|-Tyr-Trp, in which cleavage of the -Tyr-|-Leu- and -Tyr-|-Trp bonds also occurs).. Functionally, cleaves peptides in various proteins in a process that requires ATP hydrolysis. Has a chymotrypsin-like activity. Plays a major role in the degradation of misfolded proteins. This Chlamydia trachomatis serovar A (strain ATCC VR-571B / DSM 19440 / HAR-13) protein is ATP-dependent Clp protease proteolytic subunit 2.